Here is a 109-residue protein sequence, read N- to C-terminus: Large ribosomal subunit protein uL22 (109 aa).

The protein belongs to the universal ribosomal protein uL22 family. As to quaternary structure, part of the 50S ribosomal subunit.

In terms of biological role, this protein binds specifically to 23S rRNA; its binding is stimulated by other ribosomal proteins, e.g. L4, L17, and L20. It is important during the early stages of 50S assembly. It makes multiple contacts with different domains of the 23S rRNA in the assembled 50S subunit and ribosome. The globular domain of the protein is located near the polypeptide exit tunnel on the outside of the subunit, while an extended beta-hairpin is found that lines the wall of the exit tunnel in the center of the 70S ribosome. In Methylibium petroleiphilum (strain ATCC BAA-1232 / LMG 22953 / PM1), this protein is Large ribosomal subunit protein uL22.